The sequence spans 274 residues: Transcription factor MYB32 (274 aa).

HTH myb-type domains are found at residues 9–61 (KDHT…INYL) and 62–116 (RPDL…KRKL). 2 DNA-binding regions (H-T-H motif) span residues 37-61 (WRSLPRSAGLQRCGKSCRLRWINYL) and 89-112 (WSLIATRLPGRTDNEIKNYWNTHV). The disordered stretch occupies residues 123–144 (PATHRPINETKTSQDSSDSSKT).

As to expression, mostly expressed in roots, and, to a lower extent, in stems, flower buds, and siliques.

It is found in the nucleus. In Arabidopsis thaliana (Mouse-ear cress), this protein is Transcription factor MYB32 (MYB32).